The sequence spans 417 residues: Probable sugar-binding periplasmic protein (417 aa).

The first 21 residues, 1–21 (MLRKLLIGTALATSFAFSAHA), serve as a signal peptide directing secretion.

This sequence belongs to the bacterial solute-binding protein 1 family.

It localises to the periplasm. Functionally, part of a binding-protein-dependent transport system for a sugar. The polypeptide is Probable sugar-binding periplasmic protein (Mesorhizobium japonicum (strain LMG 29417 / CECT 9101 / MAFF 303099) (Mesorhizobium loti (strain MAFF 303099))).